A 251-amino-acid chain; its full sequence is uncharacterized protein (251 aa).

Residues lysine 3–valine 118 form the Response regulatory domain. Aspartate 55 carries the 4-aspartylphosphate modification. An HTH araC/xylS-type domain is found at asparagine 152–glutamine 249. DNA-binding regions (H-T-H motif) lie at residues leucine 169–valine 190 and histidine 216–leucine 239.

Post-translationally, phosphorylated by SERP2405.

The protein resides in the cytoplasm. Functionally, probable member of the two-component regulatory system SERP2405/SERP2406. This is an uncharacterized protein from Staphylococcus epidermidis (strain ATCC 35984 / DSM 28319 / BCRC 17069 / CCUG 31568 / BM 3577 / RP62A).